A 173-amino-acid polypeptide reads, in one-letter code: Alpha-crystallin A chain (173 aa).

Met-1 bears the N-acetylmethionine mark. A required for complex formation with BFSP1 and BFSP2 region spans residues 1–63 (MDIAIQHPWF…RTVLDSGISE (63 aa)). Gln-6 is modified (deamidated glutamine; partial). A Phosphoserine modification is found at Ser-45. The residue at position 50 (Gln-50) is a Deamidated glutamine; partial. The 111-residue stretch at 52-162 (LFRTVLDSGI…GHSERAIPVS (111 aa)) folds into the sHSP domain. N6-acetyllysine is present on Lys-70. Gln-90 carries the post-translational modification Deamidated glutamine; partial. The residue at position 99 (Lys-99) is an N6-acetyllysine. Residue His-100 participates in Zn(2+) binding. Asn-101 is modified (deamidated asparagine; partial). 2 residues coordinate Zn(2+): Glu-102 and His-107. Ser-122 carries the phosphoserine modification. Asn-123 carries the deamidated asparagine; partial modification. Positions 144–173 (PKVPSGVDAGHSERAIPVSREEKPSSAPSS) are disordered. Positions 153 to 167 (GHSERAIPVSREEKP) are enriched in basic and acidic residues. His-154 is a binding site for Zn(2+). An O-linked (GlcNAc) serine glycan is attached at Ser-162.

The protein belongs to the small heat shock protein (HSP20) family. As to quaternary structure, heteromer composed of three CRYAA and one CRYAB subunits. Inter-subunit bridging via zinc ions enhances stability, which is crucial as there is no protein turn over in the lens. Can also form homodimers and homotetramers (dimers of dimers) which serve as the building blocks of homooligomers. Within homooligomers, the zinc-binding motif is created from residues of 3 different molecules. His-100 and Glu-102 from one molecule are ligands of the zinc ion, and His-107 and His-154 residues from additional molecules complete the site with tetrahedral coordination geometry. Part of a complex required for lens intermediate filament formation composed of BFSP1, BFSP2 and CRYAA. In terms of processing, acetylation at Lys-70 may increase chaperone activity. Post-translationally, undergoes age-dependent proteolytical cleavage at the C-terminus.

It is found in the cytoplasm. Its subcellular location is the nucleus. Its function is as follows. Contributes to the transparency and refractive index of the lens. Acts as a chaperone, preventing aggregation of various proteins under a wide range of stress conditions. Required for the correct formation of lens intermediate filaments as part of a complex composed of BFSP1, BFSP2 and CRYAA. The sequence is that of Alpha-crystallin A chain (CRYAA) from Pteropus poliocephalus (Grey-headed flying fox).